The chain runs to 558 residues: Ankyrin repeat protein OPG189 (558 aa).

ANK repeat units follow at residues 65–95 (YGENILHIYSMDDANTNIIIFFLDRVLNINK), 169–205 (YGCTLLHRCIYHYKKSESESYNELIKILLNNGSDVDK), 209–239 (YGNTPFILLCKHDINNVELFEICLENANIDS), 243–272 (NRYTPLHYVSCRNKYDFVKLLISKGANVNA), 276–304 (FGTTPFYCGIIHGISLIKLYLESDTELEI), 339–368 (YNETSIYDAVSYNAYNTLVYLLNRNGDFET), and 372–401 (SGCTCISEAVANNNKIIMEVLLSKRPSLKI).

It belongs to the orthopoxvirus OPG189 protein family.

In terms of biological role, contributes to viral release without involving rearrangement of host actin. The polypeptide is Ankyrin repeat protein OPG189 (OPG189) (Vaccinia virus (strain Western Reserve) (VACV)).